Reading from the N-terminus, the 340-residue chain is CMP-N-acetylneuraminate-beta-galactosamide-alpha-2,3-sialyltransferase 1 (340 aa).

Residues Met-1–Thr-13 lie on the Cytoplasmic side of the membrane. The helical; Signal-anchor for type II membrane protein transmembrane segment at Phe-14–Ala-34 threads the bilayer. Residues Thr-35 to Arg-340 are Lumenal-facing. Cystine bridges form between Cys-59/Cys-64, Cys-61/Cys-139, and Cys-142/Cys-281. N-linked (GlcNAc...) asparagine glycosylation is present at Asn-79. Gln-105 serves as a coordination point for substrate. Asn-114 carries an N-linked (GlcNAc...) asparagine glycan. Asn-147 and Asn-170 together coordinate substrate. A glycan (N-linked (GlcNAc...) asparagine) is linked at Asn-201. Residues Tyr-230, Tyr-266, Gly-270, Gly-290, His-299, and His-316 each coordinate substrate. N-linked (GlcNAc...) asparagine glycosylation is present at Asn-323.

The protein belongs to the glycosyltransferase 29 family. The soluble form derives from the membrane form by proteolytic processing. In terms of tissue distribution, expressed in several tissues. Highest expression in lung, liver, skeletal muscle, kidney, pancreas, spleen and placenta.

It localises to the golgi apparatus. It is found in the golgi stack membrane. The protein localises to the trans-Golgi network membrane. Its subcellular location is the secreted. The enzyme catalyses a beta-D-galactosyl-(1-&gt;3)-N-acetyl-alpha-D-galactosaminyl derivative + CMP-N-acetyl-beta-neuraminate = an N-acetyl-alpha-neuraminyl-(2-&gt;3)-beta-D-galactosyl-(1-&gt;3)-N-acetyl-alpha-D-galactosaminyl derivative + CMP + H(+). The catalysed reaction is a ganglioside GM1 + CMP-N-acetyl-beta-neuraminate = a ganglioside GD1a + CMP + H(+). It catalyses the reaction a ganglioside GM1 (d18:1(4E)) + CMP-N-acetyl-beta-neuraminate = a ganglioside GD1a (d18:1(4E)) + CMP + H(+). It carries out the reaction ganglioside GM1 (d18:1(4E)/18:0) + CMP-N-acetyl-beta-neuraminate = ganglioside GD1a (18:1(4E)/18:0) + CMP + H(+). The enzyme catalyses a ganglioside GA1 + CMP-N-acetyl-beta-neuraminate = a ganglioside GM1b + CMP + H(+). The catalysed reaction is a ganglioside GA1 (d18:1(4E)) + CMP-N-acetyl-beta-neuraminate = a ganglioside GM1b (d18:1(4E)) + CMP + H(+). It catalyses the reaction a ganglioside GD1b + CMP-N-acetyl-beta-neuraminate = a ganglioside GT1b + CMP + H(+). It carries out the reaction a 3-O-[beta-D-galactosyl-(1-&gt;3)-N-acetyl-alpha-D-galactosaminyl]-L-threonyl-[protein] + CMP-N-acetyl-beta-neuraminate = a 3-O-[N-acetyl-alpha-neuraminyl-(2-&gt;3)-beta-D-galactosyl-(1-&gt;3)-N-acetyl-alpha-D-galactosaminyl]-L-threonyl-[protein] + CMP + H(+). The enzyme catalyses a 3-O-[beta-D-galactosyl-(1-&gt;3)-N-acetyl-alpha-D-galactosaminyl]-L-seryl-[protein] + CMP-N-acetyl-beta-neuraminate = 3-O-[N-acetyl-alpha-neuraminyl-(2-&gt;3)-beta-D-galactosyl-(1-&gt;3)-N-acetyl-alpha-D-galactosaminyl]-L-seryl-[protein] + CMP + H(+). Its pathway is protein modification; protein glycosylation. It participates in glycolipid biosynthesis. Its function is as follows. A beta-galactoside alpha2-&gt;3 sialyltransferase involved in terminal sialylation of glycoproteins and glycolipids. Catalyzes the transfer of sialic acid (N-acetyl-neuraminic acid; Neu5Ac) from the nucleotide sugar donor CMP-Neu5Ac onto acceptor Galbeta-(1-&gt;3)-GalNAc-terminated glycoconjugates through an alpha2-3 linkage. Adds sialic acid to the core 1 O-glycan, Galbeta-(1-&gt;3)-GalNAc-O-Ser/Thr, which is a major structure of mucin-type O-glycans. As part of a homeostatic mechanism that regulates CD8-positive T cell numbers, sialylates core 1 O-glycans of T cell glycoproteins, SPN/CD43 and PTPRC/CD45. Prevents premature apoptosis of thymic CD8-positive T cells prior to peripheral emigration, whereas in the secondary lymphoid organs controls the survival of CD8-positive memory T cells generated following a successful immune response. Transfers sialic acid to asialofetuin, presumably onto Galbeta-(1-&gt;3)-GalNAc-O-Ser. Sialylates GM1a, GA1 and GD1b gangliosides to form GD1a, GM1b and GT1b, respectively. The protein is CMP-N-acetylneuraminate-beta-galactosamide-alpha-2,3-sialyltransferase 1 of Homo sapiens (Human).